Here is a 158-residue protein sequence, read N- to C-terminus: MALEVLMLLAVLIWTGAENLHVKISCSLDWLMVSVIPVAESRNLYIFADELHLGMGCPANRIHTYVYEFIYLVRDCGIRTRVVSEETLLFQTELYFTPRNIDHDPQEIHLECSTSRKSVWLTPVSTENEIKLDPSPFIADFQTTAEELGLLSSSPNLL.

An N-terminal signal peptide occupies residues 1–17 (MALEVLMLLAVLIWTGA).

It belongs to the PLAC1 family. Highly expressed in oocytes.

It localises to the secreted. The protein localises to the cytoplasm. Functionally, involved in oocyte maturation. This Homo sapiens (Human) protein is Oocyte-secreted protein 2 (OOSP2).